Here is a 159-residue protein sequence, read N- to C-terminus: Putative ribosomal RNA large subunit methyltransferase H (159 aa).

S-adenosyl-L-methionine contacts are provided by residues Leu76, Gly108, and 127–132; that span reads FSKMTF.

The protein belongs to the RNA methyltransferase RlmH family.

The protein resides in the cytoplasm. It carries out the reaction pseudouridine(1915) in 23S rRNA + S-adenosyl-L-methionine = N(3)-methylpseudouridine(1915) in 23S rRNA + S-adenosyl-L-homocysteine + H(+). Its function is as follows. Specifically methylates the pseudouridine at position 1915 (m3Psi1915) in 23S rRNA. This chain is Putative ribosomal RNA large subunit methyltransferase H, found in Methanococcus maripaludis (strain C5 / ATCC BAA-1333).